A 421-amino-acid chain; its full sequence is MAAGFGRCCRVLRSISRFQWRSQHTKANRQREPGLGFSFEFTEQQKEFQATARKFAREEIIPVAAEYDKTGEYPVPLIRRAWELGLMNTHIPENCGGLGLGTFDACLISEELAYGCTGVQTAIEGNSLGQMPIIIAGNDQQKKKYLGRMTEEPLMCAYCVTEPGAGSDVAGIKTKAEKKGDEYIINGQKMWITNGGKANWYFLLARSDPDPKAPANKAFTGFIVEADTPGIQIGRKELNMGQRCSDTRGIVFEDVKVPRENVLIGDGAGFKVAMGAFDKTRPVVAAGAVGLAQRALDEATKYALERKTFGKLLVEHQAISFMLAEMAMKVELARMSYQRAAWEVDSGRRNTYYASIAKAFAGDIANQLATDAVQILGGNGFNTEYPVEKLMRDAKIYQIYEGTSQIQRLIVAREHIDKYKN.

A mitochondrion-targeting transit peptide spans Met-1 to Thr-25. Lys-69 bears the N6-acetyllysine; alternate mark. At Lys-69 the chain carries N6-succinyllysine; alternate. Residue Tyr-158 to Ser-167 coordinates FAD. Ser-167 is an octanoyl-CoA binding site. Lys-179 carries the N6-succinyllysine modification. Trp-191–Thr-193 is an FAD binding site. An N6-acetyllysine; alternate mark is found at Lys-212, Lys-217, and Lys-271. N6-succinyllysine; alternate is present on residues Lys-212, Lys-217, and Lys-271. Asp-278 contacts octanoyl-CoA. Position 279 is an N6-acetyllysine (Lys-279). Arg-281 contacts octanoyl-CoA. Lys-301 carries the N6-acetyllysine modification. FAD contacts are provided by residues Arg-306–Thr-308 and His-316–Gln-317. The octanoyl-CoA site is built by Arg-349 and Thr-351. Residue Thr-351 is modified to Phosphothreonine. An FAD-binding site is contributed by Gln-374–Gly-378. Glu-401 contacts octanoyl-CoA. Glu-401 functions as the Proton acceptor in the catalytic mechanism. Gly-402–Gln-405 is an FAD binding site.

The protein belongs to the acyl-CoA dehydrogenase family. In terms of assembly, homotetramer. Interacts with the heterodimeric electron transfer flavoprotein ETF. Requires FAD as cofactor. In terms of processing, acetylated. Could occur at proximity of the cofactor-binding sites and reduce the catalytic activity. Could be deacetylated by SIRT3.

Its subcellular location is the mitochondrion matrix. It catalyses the reaction a medium-chain 2,3-saturated fatty acyl-CoA + oxidized [electron-transfer flavoprotein] + H(+) = a medium-chain (2E)-enoyl-CoA + reduced [electron-transfer flavoprotein]. The catalysed reaction is pentanoyl-CoA + oxidized [electron-transfer flavoprotein] + H(+) = (2E)-pentenoyl-CoA + reduced [electron-transfer flavoprotein]. It carries out the reaction hexanoyl-CoA + oxidized [electron-transfer flavoprotein] + H(+) = (2E)-hexenoyl-CoA + reduced [electron-transfer flavoprotein]. The enzyme catalyses octanoyl-CoA + oxidized [electron-transfer flavoprotein] + H(+) = (2E)-octenoyl-CoA + reduced [electron-transfer flavoprotein]. It catalyses the reaction decanoyl-CoA + oxidized [electron-transfer flavoprotein] + H(+) = (2E)-decenoyl-CoA + reduced [electron-transfer flavoprotein]. The catalysed reaction is dodecanoyl-CoA + oxidized [electron-transfer flavoprotein] + H(+) = (2E)-dodecenoyl-CoA + reduced [electron-transfer flavoprotein]. It carries out the reaction tetradecanoyl-CoA + oxidized [electron-transfer flavoprotein] + H(+) = (2E)-tetradecenoyl-CoA + reduced [electron-transfer flavoprotein]. The enzyme catalyses oxidized [electron-transfer flavoprotein] + hexadecanoyl-CoA + H(+) = (2E)-hexadecenoyl-CoA + reduced [electron-transfer flavoprotein]. It functions in the pathway lipid metabolism; mitochondrial fatty acid beta-oxidation. In terms of biological role, medium-chain specific acyl-CoA dehydrogenase is one of the acyl-CoA dehydrogenases that catalyze the first step of mitochondrial fatty acid beta-oxidation, an aerobic process breaking down fatty acids into acetyl-CoA and allowing the production of energy from fats. The first step of fatty acid beta-oxidation consists in the removal of one hydrogen from C-2 and C-3 of the straight-chain fatty acyl-CoA thioester, resulting in the formation of trans-2-enoyl-CoA. Electron transfer flavoprotein (ETF) is the electron acceptor that transfers electrons to the main mitochondrial respiratory chain via ETF-ubiquinone oxidoreductase (ETF dehydrogenase). Among the different mitochondrial acyl-CoA dehydrogenases, medium-chain specific acyl-CoA dehydrogenase acts specifically on acyl-CoAs with saturated 6 to 12 carbons long primary chains. This chain is Medium-chain specific acyl-CoA dehydrogenase, mitochondrial, found in Pan troglodytes (Chimpanzee).